The following is a 454-amino-acid chain: Tyrosine aminotransferase (454 aa).

Met-1 carries the post-translational modification N-acetylmethionine. An N6-(pyridoxal phosphate)lysine modification is found at Lys-280. Ser-448 is subject to Phosphoserine.

Belongs to the class-I pyridoxal-phosphate-dependent aminotransferase family. Homodimer. Requires pyridoxal 5'-phosphate as cofactor.

It catalyses the reaction L-tyrosine + 2-oxoglutarate = 3-(4-hydroxyphenyl)pyruvate + L-glutamate. Its pathway is amino-acid degradation; L-phenylalanine degradation; acetoacetate and fumarate from L-phenylalanine: step 2/6. Functionally, transaminase involved in tyrosine breakdown. Converts tyrosine to p-hydroxyphenylpyruvate. Can catalyze the reverse reaction, using glutamic acid, with 2-oxoglutarate as cosubstrate (in vitro). Has much lower affinity and transaminase activity for phenylalanine. The chain is Tyrosine aminotransferase (Tat) from Mus musculus (Mouse).